We begin with the raw amino-acid sequence, 270 residues long: Energy-coupling factor transporter transmembrane protein EcfT (270 aa).

4 consecutive transmembrane segments (helical) span residues 36-56 (LFIV…LISI), 72-92 (PIFI…GGAN), 108-128 (LIMA…TSLL), and 248-268 (FIAS…RIWW).

It belongs to the energy-coupling factor EcfT family. In terms of assembly, forms a stable energy-coupling factor (ECF) transporter complex composed of 2 membrane-embedded substrate-binding proteins (S component), 2 ATP-binding proteins (A component) and 2 transmembrane proteins (T component). May be able to interact with more than 1 S component at a time.

The protein resides in the cell membrane. Its function is as follows. Transmembrane (T) component of an energy-coupling factor (ECF) ABC-transporter complex. Unlike classic ABC transporters this ECF transporter provides the energy necessary to transport a number of different substrates. The protein is Energy-coupling factor transporter transmembrane protein EcfT of Clostridium kluyveri (strain ATCC 8527 / DSM 555 / NBRC 12016 / NCIMB 10680 / K1).